A 130-amino-acid polypeptide reads, in one-letter code: Small ribosomal subunit protein uS8 (130 aa).

This sequence belongs to the universal ribosomal protein uS8 family. In terms of assembly, part of the 30S ribosomal subunit. Contacts proteins S5 and S12.

Functionally, one of the primary rRNA binding proteins, it binds directly to 16S rRNA central domain where it helps coordinate assembly of the platform of the 30S subunit. This chain is Small ribosomal subunit protein uS8, found in Shewanella sp. (strain MR-7).